The following is a 287-amino-acid chain: Elongation factor Ts (287 aa).

The involved in Mg(2+) ion dislocation from EF-Tu stretch occupies residues 80 to 83 (TDFL).

Belongs to the EF-Ts family.

It is found in the cytoplasm. In terms of biological role, associates with the EF-Tu.GDP complex and induces the exchange of GDP to GTP. It remains bound to the aminoacyl-tRNA.EF-Tu.GTP complex up to the GTP hydrolysis stage on the ribosome. This is Elongation factor Ts from Pseudomonas putida (strain ATCC 700007 / DSM 6899 / JCM 31910 / BCRC 17059 / LMG 24140 / F1).